Reading from the N-terminus, the 206-residue chain is MEHHQIYRHKKFDMGRKIEKCDLQLKEELISRSGTPCTSRSPFDAANQSVSLGFSDQDADFPPLPKRRRLGSSSSSVSYQSASPIITEAIQDIFKYHVNMVRKFPKKERSPKDQERRNKNTIACRMSRRKKKFDDLQIEQQYKECSDEHLKIAEQSLRARVYLNHLKQLVKQEDHPLVSSRRVPEENTKSNFSIDYLIGGIKQEHA.

Residues 54-77 (FSDQDADFPPLPKRRRLGSSSSSV) form a disordered region.

Functionally, plays a role in inducing apoptosis and is involved in the repair of head patterning defects in the embryo caused by extra maternal copies of the homeotic gene bicoid. This Drosophila melanogaster (Fruit fly) protein is Protein Mabiki.